Here is a 398-residue protein sequence, read N- to C-terminus: Serpin-ZX (398 aa).

The tract at residues 342–366 is RCL; it reads GTEAAARTARVVTLRSLPVEPVKVD.

Belongs to the serpin family. In terms of tissue distribution, expressed in roots, coleoptiles, shoots, leaves, embryo and endosperm.

Functionally, inhibits chymotrypsin, cathepsin G and trypsin in vitro. In Hordeum vulgare (Barley), this protein is Serpin-ZX (PAZX).